Here is a 106-residue protein sequence, read N- to C-terminus: Pyrimidine/purine nucleoside phosphorylase (106 aa).

It belongs to the nucleoside phosphorylase PpnP family.

The enzyme catalyses a purine D-ribonucleoside + phosphate = a purine nucleobase + alpha-D-ribose 1-phosphate. It carries out the reaction adenosine + phosphate = alpha-D-ribose 1-phosphate + adenine. The catalysed reaction is cytidine + phosphate = cytosine + alpha-D-ribose 1-phosphate. It catalyses the reaction guanosine + phosphate = alpha-D-ribose 1-phosphate + guanine. The enzyme catalyses inosine + phosphate = alpha-D-ribose 1-phosphate + hypoxanthine. It carries out the reaction thymidine + phosphate = 2-deoxy-alpha-D-ribose 1-phosphate + thymine. The catalysed reaction is uridine + phosphate = alpha-D-ribose 1-phosphate + uracil. It catalyses the reaction xanthosine + phosphate = alpha-D-ribose 1-phosphate + xanthine. In terms of biological role, catalyzes the phosphorolysis of diverse nucleosides, yielding D-ribose 1-phosphate and the respective free bases. Can use uridine, adenosine, guanosine, cytidine, thymidine, inosine and xanthosine as substrates. Also catalyzes the reverse reactions. The protein is Pyrimidine/purine nucleoside phosphorylase of Leptospira interrogans serogroup Icterohaemorrhagiae serovar copenhageni (strain Fiocruz L1-130).